A 178-amino-acid polypeptide reads, in one-letter code: Nicotinamide-nucleotide adenylyltransferase (178 aa).

Belongs to the archaeal NMN adenylyltransferase family. As to quaternary structure, homohexamer.

The protein resides in the cytoplasm. It catalyses the reaction beta-nicotinamide D-ribonucleotide + ATP + H(+) = diphosphate + NAD(+). Its pathway is cofactor biosynthesis; NAD(+) biosynthesis; NAD(+) from nicotinamide D-ribonucleotide: step 1/1. In Methanothermobacter thermautotrophicus (strain ATCC 29096 / DSM 1053 / JCM 10044 / NBRC 100330 / Delta H) (Methanobacterium thermoautotrophicum), this protein is Nicotinamide-nucleotide adenylyltransferase.